The chain runs to 119 residues: DNA-binding protein Maeo_0998 (119 aa).

Over residues 1–11 (MDIEEIKRQKM) the composition is skewed to basic and acidic residues. Positions 1 to 36 (MDIEEIKRQKMMELQQQQAQGAPNPEEIQQQQEQER) are disordered. Low complexity predominate over residues 15–32 (QQQQAQGAPNPEEIQQQQ).

Belongs to the PDCD5 family.

This Methanococcus aeolicus (strain ATCC BAA-1280 / DSM 17508 / OCM 812 / Nankai-3) protein is DNA-binding protein Maeo_0998.